A 105-amino-acid polypeptide reads, in one-letter code: Met repressor (105 aa).

Belongs to the MetJ family. In terms of assembly, homodimer.

It is found in the cytoplasm. In terms of biological role, this regulatory protein, when combined with SAM (S-adenosylmethionine) represses the expression of the methionine regulon and of enzymes involved in SAM synthesis. This chain is Met repressor, found in Glaesserella parasuis serovar 5 (strain SH0165) (Haemophilus parasuis).